A 507-amino-acid chain; its full sequence is Variant surface glycoprotein ILTAT 1.25 (507 aa).

The signal sequence occupies residues 1-21 (MQSQQQPVFISIILLAINTDA). Residues 83–95 (EPEAAPKESRSDE) show a composition bias toward basic and acidic residues. The interval 83–102 (EPEAAPKESRSDETPEACKA) is disordered. 2 N-linked (GlcNAc...) asparagine glycosylation sites follow: Asn141 and Asn371. The span at 384 to 395 (PTKQPPAKAAAA) shows a compositional bias: low complexity. A disordered region spans residues 384–474 (PTKQPPAKAA…KKEEECKSPN (91 aa)). Residues 396 to 420 (PEKKSNPQKDCNKNTKKRDCKEGDG) show a composition bias toward basic and acidic residues. Over residues 444 to 455 (SAAGAGDAGASD) the composition is skewed to low complexity. A compositionally biased stretch (basic and acidic residues) spans 456–474 (TEAKKCSDKKKEEECKSPN). The GPI-anchor amidated aspartate moiety is linked to residue Asp484. The propeptide at 485–507 (SSILANKQFALSVASAAFVALLF) is removed in mature form.

It is found in the cell membrane. In terms of biological role, VSG forms a coat on the surface of the parasite. The trypanosome evades the immune response of the host by expressing a series of antigenically distinct VSGs from an estimated 1000 VSG genes. In Trypanosoma brucei brucei, this protein is Variant surface glycoprotein ILTAT 1.25.